The chain runs to 213 residues: Ribosomal RNA small subunit methyltransferase G (213 aa).

S-adenosyl-L-methionine contacts are provided by residues Gly-83, Leu-88, 132-133, and Arg-146; that span reads IE.

This sequence belongs to the methyltransferase superfamily. RNA methyltransferase RsmG family.

The protein localises to the cytoplasm. The enzyme catalyses guanosine(527) in 16S rRNA + S-adenosyl-L-methionine = N(7)-methylguanosine(527) in 16S rRNA + S-adenosyl-L-homocysteine. Specifically methylates the N7 position of guanine in position 527 of 16S rRNA. The protein is Ribosomal RNA small subunit methyltransferase G of Granulibacter bethesdensis (strain ATCC BAA-1260 / CGDNIH1).